Reading from the N-terminus, the 207-residue chain is Cytochrome c biogenesis ATP-binding export protein CcmA (207 aa).

Positions 4 to 207 (LEARELLCER…RISLTQTRAA (204 aa)) constitute an ABC transporter domain. 36-43 (GSNGAGKT) contacts ATP.

It belongs to the ABC transporter superfamily. CcmA exporter (TC 3.A.1.107) family. The complex is composed of two ATP-binding proteins (CcmA) and two transmembrane proteins (CcmB).

It localises to the cell inner membrane. The catalysed reaction is heme b(in) + ATP + H2O = heme b(out) + ADP + phosphate + H(+). In terms of biological role, part of the ABC transporter complex CcmAB involved in the biogenesis of c-type cytochromes; once thought to export heme, this seems not to be the case, but its exact role is uncertain. Responsible for energy coupling to the transport system. The sequence is that of Cytochrome c biogenesis ATP-binding export protein CcmA from Shigella flexneri.